The following is a 421-amino-acid chain: FAD-dependent monooxygenase atnJ (421 aa).

Residues 9–29 (LVPLHVVIVGAGIGGLSAAVA) traverse the membrane as a helical segment. FAD contacts are provided by E41 and A54. R188 is an active-site residue. Residues D303 and V316 each contribute to the FAD site. The tract at residues 371–392 (RDGDAQAARDSQRKATSGTGQN) is disordered.

It belongs to the paxM FAD-dependent monooxygenase family. It depends on FAD as a cofactor.

The protein localises to the membrane. The protein operates within secondary metabolite biosynthesis; terpenoid biosynthesis. FAD-dependent monooxygenase; part of the gene cluster that mediates the biosynthesis of the meroterpenoids arthripenoids. The pathway begins with the HR-PKS atnH that catalyzes two chain-extension steps to form a reduced triketide, which then primes the SAT domain in the NR-PKS atnG to initiate three more cycles of extension to give a linear hexaketide corresponding to the polyketide part of arthripenoids. The FAD-dependent monooxygenase atnJ then performs an oxidative decarboxylation at C11 of the atnH/atnG product, via an electrophilic aromatic hydroxylation with concomitant ipso-decarboxylation. The membrane-bound polyprenyl transferase atnF then introduces a farnesyl group before the FAD-dependent monooxygenase atnK functions as the first epoxidase on terminal C12'-C13' olefin, followed by a second epoxidation on C7'-C8' catalyzed by atnA. The terpene cyclase/mutase atnI then initiates the sequential tricyclic ring formation through protonation of the terminal epoxide and catalyzes the regioselective and stereoselective 6/6/6-tricyclic ring formation. The cytochrome P450 monooxygenase atnM is responsible for hydroxylating both C1' and C10'. The next steps may involve ketoreduction and acetyl transfer by the ketoreductase atnB and the acetyltransferase atnC, and lead to the production of arthripenoid B, the final biosynthetic product of the atn cluster. The hydroquinone moiety in arthripenoid B is prone to undergo spontaneous oxidation to afford a benzoquinone compound, a key intermediate for generating structure diversity. For instance, addition of a cysteine followed by ring contraction gives arthripenoid A, tautomerization gives the main product arthripenoid C, addition of a molecular of water or amine affords arthripenoid D or E, respectively, and loss of one water forms arthripenoid F. This is FAD-dependent monooxygenase atnJ from Arthrinium sp.